Reading from the N-terminus, the 134-residue chain is Large ribosomal subunit protein uL16c (134 aa).

It belongs to the universal ribosomal protein uL16 family. Part of the 50S ribosomal subunit.

Its subcellular location is the plastid. It localises to the chloroplast. The sequence is that of Large ribosomal subunit protein uL16c from Pinus thunbergii (Japanese black pine).